A 98-amino-acid polypeptide reads, in one-letter code: NADH-ubiquinone oxidoreductase chain 4L (98 aa).

3 consecutive transmembrane segments (helical) span residues 2–22 (PSISTNIVLAFITALLGMLIF), 29–49 (SLLCLEGMMLSMFILSTLTIL), and 61–81 (ILLLVFAACEAAVGLALLVTV).

Belongs to the complex I subunit 4L family. As to quaternary structure, core subunit of respiratory chain NADH dehydrogenase (Complex I) which is composed of 45 different subunits.

The protein resides in the mitochondrion inner membrane. It carries out the reaction a ubiquinone + NADH + 5 H(+)(in) = a ubiquinol + NAD(+) + 4 H(+)(out). Its function is as follows. Core subunit of the mitochondrial membrane respiratory chain NADH dehydrogenase (Complex I) which catalyzes electron transfer from NADH through the respiratory chain, using ubiquinone as an electron acceptor. Part of the enzyme membrane arm which is embedded in the lipid bilayer and involved in proton translocation. This is NADH-ubiquinone oxidoreductase chain 4L (MT-ND4L) from Eulemur rubriventer (Red-bellied lemur).